Consider the following 150-residue polypeptide: Galactose-binding lectin (150 aa).

Residues histidine 16 and glycine 19 each contribute to the D-galactose site. Asparagine 26 carries N-linked (GlcNAc...) asparagine glycosylation. Residues aspartate 27, 35-37, histidine 64, and glycine 67 each bind D-galactose; that span reads DIH. N-linked (GlcNAc...) asparagine glycosylation is present at asparagine 74. Residues glutamate 75, 83 to 85, histidine 108, and glycine 111 each bind D-galactose; that span reads DRH. Asparagine 118 is a glycosylation site (N-linked (GlcNAc...) asparagine). D-galactose is bound by residues glutamate 119 and 127–129; that span reads DKH.

Homodimer. Likely to form large oligomers; oligomerization enhances hemagglutination activity. Post-translationally, glycosylated.

Hemagglutination activity is not dependent on divalent cations. Hemagglutination activity is highly inhibited by D-galactose and N-acetyl-D-galactosamine, and to a lesser extent by raffinose. Also inhibited by melibiose and alpha-lactose, but not by beta-lactose or D-glucose. D-galactose-binding lectin. Also binds N-acetyl-D-galactosamine. Has hemagglutination activity towards all types of human erythrocytes (O, A and B) and rabbit erythrocytes. Agglutinates Gram-negative and Gram-positive bacteria including E.coli DH5-alpha and L.plantarum ATCC8014, respectively, and has bacteriostatic activity against them. Also agglutinates M.lysodeikticus. May be involved in innate immunity by recognizing and eliminating pathogens. This is Galactose-binding lectin from Mytilus californianus (California mussel).